A 787-amino-acid polypeptide reads, in one-letter code: MANILKKWIESDRRELRRINKIANKVESYAKQMSELTDEQLQAKTDEFRERYKKGESLDHMLPEAFAVSREGAKRVLGLYPFHVQIMGGIVLHEGNIAEMRTGEGKTLTATMPVYLNAISGKGVHVITVNEYLSKRDATEMGQLYNWLGCSVGINNSEMSPDQKREAYKADIMYSTNSEIGFDYLRDNMAVYKEDQVQRGLNYALVDEVDSILIDEARTPLIISGPGTGTSKLYKQTDRFVKQLKKDVDYKIDLESKTVSLTDEGIKKAEKYFNLKNLYDPENTALTHHLDQALRANYIMLLDKDYVVQDGEVLIVDSFTGRVMEGRRFSDGLHQAIEAKEGVEIQEENKTMANITYQNLFRMYNKLAGMTGTAKTEQEEFREIYNMETITIPTNRPVQRKDEPDLLYPTLQSKFAAVVDRIKKLHAKGQPILVGTVAVETSEYLSQLLDKENIPHVVLNAKNHAKEAEIVKNAGQKGAVTIATNMAGRGTDIKLGPGVREIGGLAVIGTERHESRRIDNQLRGRSGRQGDPGLSQFYLSLEDDLMKRFGGDRIKAFLERMKVNDEDAVIKSRFLTHQVESAQKRVEGNNYDSRKNVLQYDDVMREQREIIYKERQQIITEDKSLKWVLMPMFRRTIQREVDQHTLGDKKDWDLQGIVDFAEEVLIKPDTITVKDLEGKSPQEMVDYLMTFAQGVYKEKQKQLYDPAQMLEFEKVVILRVVDSHWTDHIDIMDQFRQSVGLRGYGQLNPLVEYQTAGYHMFEQMIADIEYETTRLFMKSEIRQNVTR.

ATP-binding positions include Gln85, 103–107 (GEGKT), and Asp492.

Belongs to the SecA family. As to quaternary structure, monomer and homodimer. Part of the essential Sec protein translocation apparatus which comprises SecA, SecYEG and auxiliary proteins SecDF. Other proteins may also be involved.

It is found in the cell membrane. It localises to the cytoplasm. It catalyses the reaction ATP + H2O + cellular proteinSide 1 = ADP + phosphate + cellular proteinSide 2.. Functionally, part of the Sec protein translocase complex. Interacts with the SecYEG preprotein conducting channel. Has a central role in coupling the hydrolysis of ATP to the transfer of proteins into and across the cell membrane, serving as an ATP-driven molecular motor driving the stepwise translocation of polypeptide chains across the membrane. In Limosilactobacillus reuteri (strain DSM 20016) (Lactobacillus reuteri), this protein is Protein translocase subunit SecA.